Consider the following 261-residue polypeptide: 3-methyl-2-oxobutanoate hydroxymethyltransferase (261 aa).

Mg(2+) is bound by residues Asp-42 and Asp-81. Residues 42-43, Asp-81, and Lys-110 each bind 3-methyl-2-oxobutanoate; that span reads DS. Residue Glu-112 coordinates Mg(2+). The active-site Proton acceptor is Glu-179.

It belongs to the PanB family. In terms of assembly, homodecamer; pentamer of dimers. It depends on Mg(2+) as a cofactor.

The protein resides in the cytoplasm. It catalyses the reaction 3-methyl-2-oxobutanoate + (6R)-5,10-methylene-5,6,7,8-tetrahydrofolate + H2O = 2-dehydropantoate + (6S)-5,6,7,8-tetrahydrofolate. Its pathway is cofactor biosynthesis; (R)-pantothenate biosynthesis; (R)-pantoate from 3-methyl-2-oxobutanoate: step 1/2. Its function is as follows. Catalyzes the reversible reaction in which hydroxymethyl group from 5,10-methylenetetrahydrofolate is transferred onto alpha-ketoisovalerate to form ketopantoate. In Thermus thermophilus (strain ATCC 27634 / DSM 579 / HB8), this protein is 3-methyl-2-oxobutanoate hydroxymethyltransferase.